Consider the following 70-residue polypeptide: Beta-defensin 107A (70 aa).

An N-terminal signal peptide occupies residues 1-26 (MPGAMKIFFFIFAALILLAQIFQART). 2 disulfides stabilise this stretch: cysteine 41–cysteine 55 and cysteine 45–cysteine 64.

Belongs to the beta-defensin family.

It is found in the secreted. Functionally, has antibacterial activity. In Pan troglodytes (Chimpanzee), this protein is Beta-defensin 107A (DEFB107A).